The sequence spans 960 residues: MLFLRPGPARGRGRGRPARAPHSGLSPPWSPAWICCWALAGCQAAWAGAGDLPSTSGRPLPPCLEKDYHFEYTECDSSGSRWRVAIPNSAVDCSGLPDPVRGKECTFSCASGEYLEMKNQVCSKCGEGTYSLGSGIKFDEWDELPAGFSNVATFMDTVVGPSDSRPEGCNNSSWVPRGNYIESNRDDCTVSLIYAVHLKKSGYVFFEYQYVDNNIFFEFFIQNDQCQEMDTTADKWVKLTDNGEWGSHSVMLKSGTNILYWRTTGILMGSKAVKPVLVKNITIEGVAYTSECFPCKPGTFSDKPGSFICQVCPRNTYSEKGAKECIRCDEDSQFSEEGSSECMERPPCTSKDYFQIHTPCDEEGKTQIMYKWIEPKICREDLTDAIRLPPSGEKKDCPPCNPGFYNNGSSSCHPCPPGTFSDGTKECRSCPAGTEPALGFEYKWWNVLPGNMKTSCFNVGNSKCDGMNGWEVAGDHIQSGAGGSDNDYLILNLHIPGFKPPTSMTGAMGSELGRITFVFETLCSADCVLYFMVDINRKSTNVVESWGGTKEKQAYTHVIFKNATFTFTWAFQRTNQGQDATTLRKKPTSAWSVHLIPTCPYIRSMARRLVFHVGLGVEALSNLSSVGSLMNGPSFTSKGTKYFHFFNISLCGHEGKKLAVCTNNITDFTVKEMVAGSDDYTNLVGAFVCQSTIIPSESKGFRAALSSQSIILADTFLGVTVETTLQNINIKEDMFPVSPSQIPDVHFFYKSSTTTTSCVNGRSTAVKMRCNPAKPGAGAISVPSKCPAGTCDGCTFYFLWESVEACPLCTEHDFHEIEGACKRGFQETLYVWNEPKWCIKGISLPEKKLSTCETVDFWLKVGAGVGAFTAVLLVALTCYFWKKNQKLEYKYSKLVMTTNSKECELPAADSCAIMEGEDNEEEVVYSNKQSLLGKLKSLATKEKEDHFESVQLKSSRSPNI.

Positions 1-26 (MLFLRPGPARGRGRGRPARAPHSGLS) are disordered. The first 44 residues, 1–44 (MLFLRPGPARGRGRGRPARAPHSGLSPPWSPAWICCWALAGCQA), serve as a signal peptide directing secretion. The Extracellular portion of the chain corresponds to 45–860 (AWAGAGDLPS…TCETVDFWLK (816 aa)). Residue asparagine 171 is glycosylated (N-linked (GlcNAc...) asparagine). Cystine bridges form between cysteine 295–cysteine 312, cysteine 325–cysteine 348, and cysteine 328–cysteine 360. 2 N-linked (GlcNAc...) asparagine glycosylation sites follow: asparagine 407 and asparagine 622. One can recognise an MRH domain in the interval 597-808 (PTCPYIRSMA…LWESVEACPL (212 aa)). Disulfide bonds link cysteine 599/cysteine 651, cysteine 661/cysteine 689, cysteine 758/cysteine 794, and cysteine 770/cysteine 806. The chain crosses the membrane as a helical span at residues 861–881 (VGAGVGAFTAVLLVALTCYFW). Topologically, residues 882–960 (KKNQKLEYKY…QLKSSRSPNI (79 aa)) are cytoplasmic. Position 949 is a phosphoserine (serine 949).

The protein belongs to the ELAPOR family.

It is found in the cell membrane. In terms of biological role, functions as a regulator of the BMP signaling pathway and may be involved in epidermal differentiation. The chain is Endosome/lysosome-associated apoptosis and autophagy regulator family member 2 from Bos taurus (Bovine).